We begin with the raw amino-acid sequence, 397 residues long: S-adenosylmethionine synthase (397 aa).

Histidine 17 is an ATP binding site. Position 19 (aspartate 19) interacts with Mg(2+). Glutamate 45 provides a ligand contact to K(+). The L-methionine site is built by glutamate 58 and glutamine 101. The flexible loop stretch occupies residues 101 to 111; the sequence is QSPDIAQGVDK. Residues 176–178, 243–244, aspartate 252, 258–259, and lysine 279 each bind ATP; these read DGK, RF, and RK. Aspartate 252 provides a ligand contact to L-methionine. Lysine 283 serves as a coordination point for L-methionine.

It belongs to the AdoMet synthase family. As to quaternary structure, homotetramer; dimer of dimers. The cofactor is Mg(2+). It depends on K(+) as a cofactor.

The protein localises to the cytoplasm. It carries out the reaction L-methionine + ATP + H2O = S-adenosyl-L-methionine + phosphate + diphosphate. It functions in the pathway amino-acid biosynthesis; S-adenosyl-L-methionine biosynthesis; S-adenosyl-L-methionine from L-methionine: step 1/1. In terms of biological role, catalyzes the formation of S-adenosylmethionine (AdoMet) from methionine and ATP. The overall synthetic reaction is composed of two sequential steps, AdoMet formation and the subsequent tripolyphosphate hydrolysis which occurs prior to release of AdoMet from the enzyme. This is S-adenosylmethionine synthase from Staphylococcus aureus (strain MRSA252).